Here is a 594-residue protein sequence, read N- to C-terminus: UvrABC system protein C (594 aa).

Residues 17–94 (LEPGCYLMKD…IKQYQPRYNI (78 aa)) enclose the GIY-YIG domain. In terms of domain architecture, UVR spans 199–234 (KTILNHLEERMNKASEQLDFEQAKEYRDMIQHIHNL).

This sequence belongs to the UvrC family. As to quaternary structure, interacts with UvrB in an incision complex.

Its subcellular location is the cytoplasm. In terms of biological role, the UvrABC repair system catalyzes the recognition and processing of DNA lesions. UvrC both incises the 5' and 3' sides of the lesion. The N-terminal half is responsible for the 3' incision and the C-terminal half is responsible for the 5' incision. The polypeptide is UvrABC system protein C (Staphylococcus epidermidis (strain ATCC 35984 / DSM 28319 / BCRC 17069 / CCUG 31568 / BM 3577 / RP62A)).